Consider the following 92-residue polypeptide: MARSLKKNPFVANHLLKKIERLNTKAEKEIIITWSRASTIIPTMIGHTIAIHNGKEHLPIYITDRMVGHKLGEFAPTINFRGHAKNDNKSRR.

This sequence belongs to the universal ribosomal protein uS19 family.

Its subcellular location is the plastid. It is found in the chloroplast. Functionally, protein S19 forms a complex with S13 that binds strongly to the 16S ribosomal RNA. The sequence is that of Small ribosomal subunit protein uS19c from Gossypium barbadense (Sea Island cotton).